We begin with the raw amino-acid sequence, 92 residues long: Small ribosomal subunit protein uS19c (92 aa).

The protein belongs to the universal ribosomal protein uS19 family.

The protein localises to the plastid. Its subcellular location is the chloroplast. In terms of biological role, protein S19 forms a complex with S13 that binds strongly to the 16S ribosomal RNA. The protein is Small ribosomal subunit protein uS19c of Eucalyptus globulus subsp. globulus (Tasmanian blue gum).